The sequence spans 556 residues: Formate--tetrahydrofolate ligase 1 (556 aa).

Position 65–72 (65–72 (TPAGEGKS)) interacts with ATP.

This sequence belongs to the formate--tetrahydrofolate ligase family.

The enzyme catalyses (6S)-5,6,7,8-tetrahydrofolate + formate + ATP = (6R)-10-formyltetrahydrofolate + ADP + phosphate. It participates in one-carbon metabolism; tetrahydrofolate interconversion. The protein is Formate--tetrahydrofolate ligase 1 of Streptococcus pyogenes serotype M18 (strain MGAS8232).